The chain runs to 479 residues: Ribosomal RNA small subunit methyltransferase F (479 aa).

Residues 125–131, glutamate 149, aspartate 176, and aspartate 194 each bind S-adenosyl-L-methionine; that span reads AAAPGSK. Cysteine 247 serves as the catalytic Nucleophile.

The protein belongs to the class I-like SAM-binding methyltransferase superfamily. RsmB/NOP family.

Its subcellular location is the cytoplasm. It carries out the reaction cytidine(1407) in 16S rRNA + S-adenosyl-L-methionine = 5-methylcytidine(1407) in 16S rRNA + S-adenosyl-L-homocysteine + H(+). In terms of biological role, specifically methylates the cytosine at position 1407 (m5C1407) of 16S rRNA. This is Ribosomal RNA small subunit methyltransferase F from Salmonella typhi.